Consider the following 436-residue polypeptide: Trigger factor (436 aa).

The PPIase FKBP-type domain occupies 161-246 (DDQLNIDFVG…VNSVAEPKLP (86 aa)).

It belongs to the FKBP-type PPIase family. Tig subfamily.

The protein resides in the cytoplasm. The enzyme catalyses [protein]-peptidylproline (omega=180) = [protein]-peptidylproline (omega=0). Functionally, involved in protein export. Acts as a chaperone by maintaining the newly synthesized protein in an open conformation. Functions as a peptidyl-prolyl cis-trans isomerase. In Pseudomonas aeruginosa (strain LESB58), this protein is Trigger factor.